A 102-amino-acid chain; its full sequence is Small ribosomal subunit protein uS10 (102 aa).

It belongs to the universal ribosomal protein uS10 family. In terms of assembly, part of the 30S ribosomal subunit.

Its function is as follows. Involved in the binding of tRNA to the ribosomes. The polypeptide is Small ribosomal subunit protein uS10 (Mycoplasma mycoides subsp. mycoides SC (strain CCUG 32753 / NCTC 10114 / PG1)).